We begin with the raw amino-acid sequence, 239 residues long: Transcriptional regulatory protein BtsR (239 aa).

The 114-residue stretch at 3–116 (KVLIVDDEPL…RLEKTLARLR (114 aa)) folds into the Response regulatory domain. 4-aspartylphosphate is present on Asp54. One can recognise an HTH LytTR-type domain in the interval 137–239 (IPCTGHSRIY…LKSLKEAIGL (103 aa)).

Phosphorylated by BtsS.

Member of the two-component regulatory system BtsS/BtsR. BtsR regulates expression of btsT by binding to its promoter region. The protein is Transcriptional regulatory protein BtsR of Shigella flexneri.